The chain runs to 427 residues: C4-dicarboxylate transport protein (427 aa).

Transmembrane regions (helical) follow at residues 5–25, 44–64, 76–96, 142–162, 184–206, 222–242, 307–327, 330–350, and 352–372; these read IFSSLYFQVLLAITLGVFLGH, LIKMIIAPVIFCTVVTGIAGM, IALLYFEVVSTIALVIGLCVV, IGAFASGNILQVLLFAVLFGF, VIFGIINMIMRLAPVGAFGAMAF, LIACFYVTCLLFIFMVLGSIA, IYLTMAAIFIAQATNTPLDLF, ITLLVVLLISSKGAAGVTGSG, and IVLAATISAVGHLPLAGLALI.

This sequence belongs to the dicarboxylate/amino acid:cation symporter (DAACS) (TC 2.A.23) family.

Its subcellular location is the cell inner membrane. Responsible for the transport of dicarboxylates such as succinate, fumarate, and malate from the periplasm across the membrane. In Aeromonas salmonicida (strain A449), this protein is C4-dicarboxylate transport protein.